The chain runs to 258 residues: Tryptophan synthase alpha chain (258 aa).

Active-site proton acceptor residues include E47 and D58.

Belongs to the TrpA family. Tetramer of two alpha and two beta chains.

The enzyme catalyses (1S,2R)-1-C-(indol-3-yl)glycerol 3-phosphate + L-serine = D-glyceraldehyde 3-phosphate + L-tryptophan + H2O. It participates in amino-acid biosynthesis; L-tryptophan biosynthesis; L-tryptophan from chorismate: step 5/5. Functionally, the alpha subunit is responsible for the aldol cleavage of indoleglycerol phosphate to indole and glyceraldehyde 3-phosphate. The chain is Tryptophan synthase alpha chain from Bacillus mycoides (strain KBAB4) (Bacillus weihenstephanensis).